The primary structure comprises 403 residues: Protein WVD2-like 6 (403 aa).

Disordered stretches follow at residues 1 to 179 (MDSE…ALPN) and 254 to 403 (LKKI…AVEP). Positions 25-56 (GDSSNGNGGTSENLECCSTQHPMEASEGTQNE) are enriched in polar residues. Low complexity predominate over residues 103-118 (SVAPNVKPVKSPKSKS). The residue at position 113 (Ser-113) is a Phosphoserine. Composition is skewed to basic and acidic residues over residues 120–132 (NGRE…HGNH), 139–153 (GTRD…RKQV), and 162–171 (QYPKEDDGKP). Over residues 263–273 (KSPKLGRKKTN) the composition is skewed to basic residues. Over residues 336-348 (KVAPAKAVTASTK) the composition is skewed to low complexity. Over residues 385-394 (VNEDRNESHM) the composition is skewed to basic and acidic residues.

This sequence belongs to the TPX2 family. In terms of tissue distribution, expressed in seedlings.

The protein localises to the cytoplasm. It is found in the cytoskeleton. Microtubule-associated protein (MAP) that regulates the orientation of interphase cortical microtubules. In Arabidopsis thaliana (Mouse-ear cress), this protein is Protein WVD2-like 6.